A 472-amino-acid chain; its full sequence is H(+)/Cl(-) exchange transporter ClcA (472 aa).

Topologically, residues 1–32 (MKAETPSFEAHQFVRVRRGDAVRRLIQRDKTP) are cytoplasmic. The chain crosses the membrane as a helical span at residues 33 to 69 (LAVLFMAAVVGTLAGLVGVAFEKSVNWVQNQRIGALA). Topologically, residues 70-76 (QVADHWY) are periplasmic. A helical membrane pass occupies residues 77 to 100 (LVWPLAFILSALLAMVGYFLVRRF). Residues 106–110 (GSGIP) carry the Selectivity filter part_1 motif. Serine 107 serves as a coordination point for chloride. An intramembrane region (helical) is located at residues 109 to 116 (IPEIEGAL). Residues 117-123 (EELRPVR) lie on the Cytoplasmic side of the membrane. The next 2 helical transmembrane spans lie at 124-141 (WWRV…TLGA) and 148-166 (EGPM…LDVF). Residues 146 to 150 (GREGP) carry the Selectivity filter part_2 motif. At 167-176 (RMRSPEARHT) the chain is on the cytoplasmic side. 2 intramembrane regions (helical) span residues 177-189 (LLAT…LSAA) and 193-201 (PLAGILFII). Over 202–214 (EEMRPQFRYNLIS) the chain is Cytoplasmic. A helical membrane pass occupies residues 215–232 (IKAVFTGVIMSSIVFRIF). Over 233 to 252 (NGEAAIIEVGKLSNAPVNTL) the chain is Periplasmic. The chain crosses the membrane as a helical span at residues 253–281 (WLYLVLGMLFGCFGPLFNFLVLRTQDLFQ). At 282 to 287 (RIHGGN) the chain is on the cytoplasmic side. A helical membrane pass occupies residues 288–309 (IKKWVLIGGLIGGLCGLLGLMQ). At 310 to 329 (PSAVGGGFNLIPIAAAGNFS) the chain is on the periplasmic side. A run of 2 helical transmembrane segments spans residues 330–349 (VGLL…ICFS) and 355–376 (GIFA…MAAI). Residues 355-359 (GIFAP) carry the Selectivity filter part_3 motif. Residues isoleucine 356 and phenylalanine 357 each contribute to the chloride site. Over 377-386 (PLFPAYHLDA) the chain is Periplasmic. Positions 387 to 401 (GTFAIAGMGALLAAS) form an intramembrane region, helical. Residues 402–404 (VRA) constitute an intramembrane region (note=Loop between two helices). The helical intramembrane region spans 405–416 (PLTGIVLVLEMT). The segment at residues 417-421 (DNYQL) is an intramembrane region (note=Loop between two helices). The chain crosses the membrane as a helical span at residues 422–438 (ILPMIITCLGATLLAQF). Residues 439–472 (LGGKPLYSTILQRTLAKQEAEQAAKAQQAPRENT) are Cytoplasmic-facing. Residue tyrosine 445 coordinates chloride.

The protein belongs to the chloride channel (TC 2.A.49) family. ClcA subfamily. Homodimer.

Its subcellular location is the cell inner membrane. It catalyses the reaction 2 chloride(in) + H(+)(out) = 2 chloride(out) + H(+)(in). In terms of biological role, proton-coupled chloride transporter. Functions as antiport system and exchanges two chloride ions for 1 proton. Probably acts as an electrical shunt for an outwardly-directed proton pump that is linked to amino acid decarboxylation, as part of the extreme acid resistance (XAR) response. This Klebsiella pneumoniae subsp. pneumoniae (strain ATCC 700721 / MGH 78578) protein is H(+)/Cl(-) exchange transporter ClcA.